The primary structure comprises 298 residues: Zinc import ATP-binding protein ZnuC (298 aa).

Residues 17-232 (IELRNAGVYR…PEYVRLFGSR (216 aa)) form the ABC transporter domain. Residue 49-56 (GQNGAGKS) coordinates ATP. The segment at 273–298 (RGHCHVEDGHHHDHEHHHHEGGQPRA) is disordered. Residues 276 to 298 (CHVEDGHHHDHEHHHHEGGQPRA) are compositionally biased toward basic and acidic residues.

The protein belongs to the ABC transporter superfamily. Zinc importer (TC 3.A.1.15.5) family. As to quaternary structure, the complex is composed of two ATP-binding proteins (ZnuC), two transmembrane proteins (ZnuB) and a solute-binding protein (ZnuA).

Its subcellular location is the cell inner membrane. It carries out the reaction Zn(2+)(out) + ATP(in) + H2O(in) = Zn(2+)(in) + ADP(in) + phosphate(in) + H(+)(in). Part of the ABC transporter complex ZnuABC involved in zinc import. Responsible for energy coupling to the transport system. The chain is Zinc import ATP-binding protein ZnuC from Brucella melitensis biotype 1 (strain ATCC 23456 / CCUG 17765 / NCTC 10094 / 16M).